Consider the following 478-residue polypeptide: Chromosomal replication initiator protein DnaA (478 aa).

A domain I, interacts with DnaA modulators region spans residues 1-95 (MNKTLNPQEV…DVLEKEITEE (95 aa)). The segment at 96 to 141 (INDLVQSMEEEDFALIDHTKPVIPNFFDQNTRVNFGGGPNNHHPTT) is domain II. The interval 142 to 358 (GVNPRFTFDN…GALLRIFALA (217 aa)) is domain III, AAA+ region. ATP is bound by residues Gly-186, Gly-188, Lys-189, and Thr-190. Positions 359-478 (SFNKEEINMT…YKLTQFILRR (120 aa)) are domain IV, binds dsDNA.

Belongs to the DnaA family. In terms of assembly, oligomerizes as a right-handed, spiral filament on DNA at oriC.

Its subcellular location is the cytoplasm. Its function is as follows. Plays an essential role in the initiation and regulation of chromosomal replication. ATP-DnaA binds to the origin of replication (oriC) to initiate formation of the DNA replication initiation complex once per cell cycle. Binds the DnaA box (a 9 base pair repeat at the origin) and separates the double-stranded (ds)DNA. Forms a right-handed helical filament on oriC DNA; dsDNA binds to the exterior of the filament while single-stranded (ss)DNA is stabiized in the filament's interior. The ATP-DnaA-oriC complex binds and stabilizes one strand of the AT-rich DNA unwinding element (DUE), permitting loading of DNA polymerase. After initiation quickly degrades to an ADP-DnaA complex that is not apt for DNA replication. Binds acidic phospholipids. This Tropheryma whipplei (strain TW08/27) (Whipple's bacillus) protein is Chromosomal replication initiator protein DnaA.